The sequence spans 358 residues: Programmed cell death protein 2-like (358 aa).

Ala2 carries the N-acetylalanine modification. Ser20 bears the Phosphoserine mark. Thr22 carries the post-translational modification Phosphothreonine.

Higher expression in lung, colon, mammary gland, cervix, stomach and small intestine.

In terms of biological role, over-expression suppresses AP1, CREB, NFAT, and NF-kB transcriptional activation, and delays cell cycle progression at S phase. This Homo sapiens (Human) protein is Programmed cell death protein 2-like (PDCD2L).